We begin with the raw amino-acid sequence, 477 residues long: Adenylyl cyclase-associated protein 2 (477 aa).

N-acetylalanine is present on Ala-2. Disordered stretches follow at residues 224-261 (VLSS…PSRS) and 274-323 (TKGL…KHAP). The span at 230 to 246 (GLPPPPPPPPPPGPPPL) shows a compositional bias: pro residues. 2 positions are modified to phosphoserine: Ser-301 and Ser-309. Residues 301-320 (SPTKSHTPSPTSPKSYPSQK) show a composition bias toward low complexity. The C-CAP/cofactor C-like domain maps to 317-455 (PSQKHAPVLE…QDGDYREFPI (139 aa)).

It belongs to the CAP family.

It localises to the cell membrane. Its function is as follows. Involved in the regulation of actin polymerization. This chain is Adenylyl cyclase-associated protein 2 (CAP2), found in Pongo abelii (Sumatran orangutan).